Consider the following 386-residue polypeptide: Phosphoglycerate kinase (386 aa).

Residues 21-23 (DLN), arginine 36, 59-62 (HLGR), arginine 113, and arginine 146 each bind substrate. Residues lysine 197, glutamate 314, and 340 to 343 (GGDT) each bind ATP.

This sequence belongs to the phosphoglycerate kinase family. As to quaternary structure, monomer.

Its subcellular location is the cytoplasm. The enzyme catalyses (2R)-3-phosphoglycerate + ATP = (2R)-3-phospho-glyceroyl phosphate + ADP. It functions in the pathway carbohydrate degradation; glycolysis; pyruvate from D-glyceraldehyde 3-phosphate: step 2/5. The protein is Phosphoglycerate kinase of Azotobacter vinelandii (strain DJ / ATCC BAA-1303).